A 207-amino-acid chain; its full sequence is Glycerol-3-phosphate acyltransferase (207 aa).

5 consecutive transmembrane segments (helical) span residues 4 to 24, 58 to 78, 86 to 106, 120 to 140, and 162 to 182; these read VVAT…SFAV, ILTL…AQLL, DMGI…PVFH, ILLA…LIIA, and VLLF…VLLI.

Belongs to the PlsY family. As to quaternary structure, probably interacts with PlsX.

The protein resides in the cell inner membrane. The enzyme catalyses an acyl phosphate + sn-glycerol 3-phosphate = a 1-acyl-sn-glycero-3-phosphate + phosphate. The protein operates within lipid metabolism; phospholipid metabolism. Catalyzes the transfer of an acyl group from acyl-phosphate (acyl-PO(4)) to glycerol-3-phosphate (G3P) to form lysophosphatidic acid (LPA). This enzyme utilizes acyl-phosphate as fatty acyl donor, but not acyl-CoA or acyl-ACP. The chain is Glycerol-3-phosphate acyltransferase from Ralstonia nicotianae (strain ATCC BAA-1114 / GMI1000) (Ralstonia solanacearum).